Here is a 127-residue protein sequence, read N- to C-terminus: Large-conductance mechanosensitive channel (127 aa).

The next 3 helical transmembrane spans lie at 9–29 (EFAM…GVAF), 32–52 (IVTA…LGGV), and 75–95 (VIDF…INLL).

This sequence belongs to the MscL family. Homopentamer.

The protein localises to the cell inner membrane. Functionally, channel that opens in response to stretch forces in the membrane lipid bilayer. May participate in the regulation of osmotic pressure changes within the cell. The protein is Large-conductance mechanosensitive channel of Legionella pneumophila (strain Lens).